The sequence spans 271 residues: ATP synthase subunit delta (271 aa).

It belongs to the ATPase delta chain family. F-type ATPases have 2 components, F(1) - the catalytic core - and F(0) - the membrane proton channel. F(1) has five subunits: alpha(3), beta(3), gamma(1), delta(1), epsilon(1). F(0) has three main subunits: a(1), b(2) and c(10-14). The alpha and beta chains form an alternating ring which encloses part of the gamma chain. F(1) is attached to F(0) by a central stalk formed by the gamma and epsilon chains, while a peripheral stalk is formed by the delta and b chains.

It localises to the cell membrane. In terms of biological role, f(1)F(0) ATP synthase produces ATP from ADP in the presence of a proton or sodium gradient. F-type ATPases consist of two structural domains, F(1) containing the extramembraneous catalytic core and F(0) containing the membrane proton channel, linked together by a central stalk and a peripheral stalk. During catalysis, ATP synthesis in the catalytic domain of F(1) is coupled via a rotary mechanism of the central stalk subunits to proton translocation. Its function is as follows. This protein is part of the stalk that links CF(0) to CF(1). It either transmits conformational changes from CF(0) to CF(1) or is implicated in proton conduction. The chain is ATP synthase subunit delta from Streptomyces griseus subsp. griseus (strain JCM 4626 / CBS 651.72 / NBRC 13350 / KCC S-0626 / ISP 5235).